We begin with the raw amino-acid sequence, 359 residues long: sn-1 acyl-lipid omega-3 desaturase (ferredoxin) (359 aa).

The next 2 membrane-spanning stretches (helical) occupy residues 44 to 64 (LGYF…AAYL) and 67 to 87 (WFFY…LFVV). A Histidine box-1 motif is present at residues 89-93 (HDCGH). The Histidine box-2 motif lies at 125 to 129 (HRTHH). A run of 3 helical transmembrane segments spans residues 153–173 (AWYE…IYLF), 206–226 (LAAF…LFLL), and 228–248 (FYVA…FLHH). Positions 291 to 295 (HHIFS) match the Histidine box-3 motif.

It belongs to the fatty acid desaturase type 2 family. The cofactor is Fe(2+).

It localises to the membrane. It carries out the reaction a 1-[(9Z,12Z)-octadecdienoyl]-2-acyl-glycerolipid + 2 reduced [2Fe-2S]-[ferredoxin] + O2 + 2 H(+) = a 1-[(9Z,12Z,15Z)-octadectrienoyl]-2-acyl-glycerolipid + 2 oxidized [2Fe-2S]-[ferredoxin] + 2 H2O. The catalysed reaction is a 1-[(6Z,9Z,12Z)-octadectrienoyl]-2-acyl-glycerolipid + 2 reduced [2Fe-2S]-[ferredoxin] + O2 + 2 H(+) = a 1-[(6Z,9Z,12Z,15Z)-octadectetraenoyl]-2-acyl-glycerolipid + 2 oxidized [2Fe-2S]-[ferredoxin] + 2 H2O. Its pathway is lipid metabolism; polyunsaturated fatty acid biosynthesis. Its function is as follows. Desaturase involved in fatty acid biosynthesis. Introduces a double bond at carbon 15 of linoleoyl and gamma-linolenoyl groups attached to the sn-1 position of the glycerol moiety of membrane glycerolipids. This chain is sn-1 acyl-lipid omega-3 desaturase (ferredoxin), found in Synechocystis sp. (strain ATCC 27184 / PCC 6803 / Kazusa).